The primary structure comprises 309 residues: Ferrochelatase (309 aa).

The Fe cation site is built by H185 and E264.

The protein belongs to the ferrochelatase family.

It localises to the cytoplasm. The catalysed reaction is heme b + 2 H(+) = protoporphyrin IX + Fe(2+). It participates in porphyrin-containing compound metabolism; protoheme biosynthesis; protoheme from protoporphyrin-IX: step 1/1. Catalyzes the ferrous insertion into protoporphyrin IX. The protein is Ferrochelatase of Aquifex aeolicus (strain VF5).